We begin with the raw amino-acid sequence, 306 residues long: Plant-type L-asparaginase (306 aa).

Thr-176 acts as the Nucleophile in catalysis. Substrate is bound by residues 203–206 (RVGD) and 225–228 (TGLG).

It belongs to the Ntn-hydrolase family. In terms of assembly, heterotetramer of two alpha and two beta chains arranged as a dimer of alpha/beta heterodimers. In terms of processing, autocleaved. Generates the alpha and beta subunits. The N-terminal residue of the beta subunit is thought to be responsible for the nucleophile hydrolase activity.

The enzyme catalyses L-asparagine + H2O = L-aspartate + NH4(+). In terms of biological role, catalyzes the hydrolysis of L-asparagine into L-aspartate and ammonia. This Pyrococcus furiosus (strain ATCC 43587 / DSM 3638 / JCM 8422 / Vc1) protein is Plant-type L-asparaginase.